The primary structure comprises 402 residues: Acetate kinase (402 aa).

N7 is a binding site for Mg(2+). K14 contacts ATP. Position 95 (R95) interacts with substrate. Catalysis depends on D152, which acts as the Proton donor/acceptor. ATP is bound by residues 212–216, 286–288, and 334–338; these read HLGNG, DMR, and GIGEN. E388 is a Mg(2+) binding site.

Belongs to the acetokinase family. As to quaternary structure, homodimer. Mg(2+) serves as cofactor. Requires Mn(2+) as cofactor.

Its subcellular location is the cytoplasm. The catalysed reaction is acetate + ATP = acetyl phosphate + ADP. The protein operates within metabolic intermediate biosynthesis; acetyl-CoA biosynthesis; acetyl-CoA from acetate: step 1/2. Catalyzes the formation of acetyl phosphate from acetate and ATP. Can also catalyze the reverse reaction. The chain is Acetate kinase from Nitratidesulfovibrio vulgaris (strain ATCC 29579 / DSM 644 / CCUG 34227 / NCIMB 8303 / VKM B-1760 / Hildenborough) (Desulfovibrio vulgaris).